We begin with the raw amino-acid sequence, 459 residues long: FBD-associated F-box protein At5g27750 (459 aa).

The F-box domain maps to 4 to 50; that stretch reads FDRISELPESLITQILLCLPTKDSVKTSVLSTRWKNLWLNVPGLDLT. The FBD domain occupies 374–426; the sequence is TEELNLINVPRCIVSTLECVEIKGLFEWEEEEMKIARYFLENAAVLKKLTMSF.

This Arabidopsis thaliana (Mouse-ear cress) protein is FBD-associated F-box protein At5g27750.